The following is a 243-amino-acid chain: R-spondin-2 (243 aa).

The first 21 residues, 1-21 (MQFRLFSFALIILNCMDYSHC), serve as a signal peptide directing secretion. 11 disulfides stabilise this stretch: Cys-40-Cys-46, Cys-43-Cys-52, Cys-55-Cys-74, Cys-78-Cys-93, Cys-96-Cys-104, Cys-101-Cys-110, Cys-113-Cys-124, Cys-128-Cys-141, Cys-145-Cys-187, Cys-156-Cys-163, and Cys-196-Cys-203. One copy of the FU repeat lies at 90–134 (MNRCARCRIENCDSCFSKDFCTKCKVGFYLHRGRCFDECPDGFAP). A TSP type-1 domain is found at 144–204 (GCEVGHWSEW…RCKMTMRHCP (61 aa)). N-linked (GlcNAc...) asparagine glycosylation is present at Asn-160. The span at 204 to 224 (PGGKRTPKAKEKRNKKKKRKL) shows a compositional bias: basic residues. Residues 204 to 243 (PGGKRTPKAKEKRNKKKKRKLIERAQEQHSVFLATDRANQ) form a disordered region.

It belongs to the R-spondin family. In terms of assembly, interacts with WNT1. Binds heparin. Interacts with LGR4, LGR5 and LGR6. Interacts with E3 ubiquitin ligases RNF43 and ZNRF3.

The protein localises to the secreted. Activator of the canonical Wnt signaling pathway by acting as a ligand for LGR4-6 receptors. Upon binding to LGR4-6 (LGR4, LGR5 or LGR6), LGR4-6 associate with phosphorylated LRP6 and frizzled receptors that are activated by extracellular Wnt receptors, triggering the canonical Wnt signaling pathway to increase expression of target genes. Also regulates the canonical Wnt/beta-catenin-dependent pathway and non-canonical Wnt signaling by acting as an inhibitor of ZNRF3, an important regulator of the Wnt signaling pathway. During embryonic development, plays a crucial role in limb specification, amplifying the Wnt signaling pathway independently of LGR4-6 receptors, possibly by acting as a direct antagonistic ligand to RNF43 and ZNRF3, hence governing the number of limbs an embryo should form. In Homo sapiens (Human), this protein is R-spondin-2 (RSPO2).